The primary structure comprises 367 residues: 4-hydroxy-3-methylbut-2-en-1-yl diphosphate synthase (flavodoxin) (367 aa).

[4Fe-4S] cluster is bound by residues Cys-270, Cys-273, Cys-305, and Glu-312.

Belongs to the IspG family. [4Fe-4S] cluster is required as a cofactor.

It catalyses the reaction (2E)-4-hydroxy-3-methylbut-2-enyl diphosphate + oxidized [flavodoxin] + H2O + 2 H(+) = 2-C-methyl-D-erythritol 2,4-cyclic diphosphate + reduced [flavodoxin]. Its pathway is isoprenoid biosynthesis; isopentenyl diphosphate biosynthesis via DXP pathway; isopentenyl diphosphate from 1-deoxy-D-xylulose 5-phosphate: step 5/6. Functionally, converts 2C-methyl-D-erythritol 2,4-cyclodiphosphate (ME-2,4cPP) into 1-hydroxy-2-methyl-2-(E)-butenyl 4-diphosphate. The protein is 4-hydroxy-3-methylbut-2-en-1-yl diphosphate synthase (flavodoxin) of Pasteurella multocida (strain Pm70).